Here is a 590-residue protein sequence, read N- to C-terminus: tRNA-guanine(15) transglycosylase (590 aa).

Aspartate 90 functions as the Nucleophile in the catalytic mechanism. Aspartate 125 provides a ligand contact to substrate. Zn(2+) is bound by residues cysteine 278, cysteine 280, and cysteine 283. One can recognise a PUA domain in the interval 502 to 577 (KGRVVVKGLF…HPFIIIRRHV (76 aa)).

It belongs to the archaeosine tRNA-ribosyltransferase family. Zn(2+) is required as a cofactor.

The enzyme catalyses guanosine(15) in tRNA + 7-cyano-7-deazaguanine = 7-cyano-7-carbaguanosine(15) in tRNA + guanine. It functions in the pathway tRNA modification; archaeosine-tRNA biosynthesis. Exchanges the guanine residue with 7-cyano-7-deazaguanine (preQ0) at position 15 in the dihydrouridine loop (D-loop) of archaeal tRNAs. This is tRNA-guanine(15) transglycosylase from Korarchaeum cryptofilum (strain OPF8).